We begin with the raw amino-acid sequence, 261 residues long: Src-like-adapter 2 (261 aa).

The segment covering 1 to 10 (MGSLPSRRKS) has biased composition (basic residues). The disordered stretch occupies residues 1-31 (MGSLPSRRKSLPSPSLSSSVQGQGPVTMEAE). G2 carries N-myristoyl glycine lipidation. The SH3 domain maps to 32 to 92 (RSKATAVALG…PSVHVAKVSH (61 aa)). An SH2 domain is found at 94–191 (WLYEGLSREK…DICCLLKEPC (98 aa)). The SLA C-terminal stretch occupies residues 195 to 261 (RAGPLPGKDI…NDEAVSLDDA (67 aa)).

In terms of assembly, interacts (via SH2 domain) with ZAP70 (phosphorylated) and CD3Z (phosphorylated). Interacts (via SH2 domain) with CSF1R (phosphorylated). Interacts (via its C-terminal domain) with CBL (phosphorylated). In terms of processing, phosphorylated by CSF1R. In terms of tissue distribution, predominantly expressed in immune system, with highest levels in peripheral blood leukocytes. Expressed in spleen, thymus and lymph nodes. Expressed in T-cells as well as in monocytes, and at low level in B-cells. Also detected in placenta, prostate, skin, retina and colon.

Its subcellular location is the cytoplasm. It is found in the cell membrane. It localises to the cytoplasmic vesicle. In terms of biological role, adapter protein, which negatively regulates T-cell receptor (TCR) signaling. Inhibits T-cell antigen-receptor induced activation of nuclear factor of activated T-cells. May act by linking signaling proteins such as ZAP70 with CBL, leading to a CBL dependent degradation of signaling proteins. The sequence is that of Src-like-adapter 2 (SLA2) from Homo sapiens (Human).